A 397-amino-acid chain; its full sequence is Acetate kinase (397 aa).

Mg(2+) is bound at residue N8. K15 contributes to the ATP binding site. R89 provides a ligand contact to substrate. Catalysis depends on D146, which acts as the Proton donor/acceptor. Residues 206–210 (HLGNG), 281–283 (DLR), and 329–333 (GIGEN) each bind ATP. Position 382 (E382) interacts with Mg(2+).

It belongs to the acetokinase family. In terms of assembly, homodimer. The cofactor is Mg(2+). Mn(2+) is required as a cofactor.

The protein localises to the cytoplasm. It catalyses the reaction acetate + ATP = acetyl phosphate + ADP. It functions in the pathway metabolic intermediate biosynthesis; acetyl-CoA biosynthesis; acetyl-CoA from acetate: step 1/2. Functionally, catalyzes the formation of acetyl phosphate from acetate and ATP. Can also catalyze the reverse reaction. This chain is Acetate kinase, found in Anoxybacillus flavithermus (strain DSM 21510 / WK1).